The primary structure comprises 290 residues: Protein ORF27 (290 aa).

The chain is Protein ORF27 (ORF27) from Human herpesvirus 8 type P (isolate GK18) (HHV-8).